Consider the following 357-residue polypeptide: D-alanine--D-alanine ligase (357 aa).

The ATP-grasp domain occupies 134-339 (KQLFEHRGLP…YPDLIAKLID (206 aa)). 167–222 (NDKLTYPVFVKPANLGSSVGISKCNNEEELKSGIAEAFQFDRKLVIEQGINAREIE) is an ATP binding site. Mg(2+) contacts are provided by Asp293, Glu306, and Asn308.

This sequence belongs to the D-alanine--D-alanine ligase family. Mg(2+) serves as cofactor. Mn(2+) is required as a cofactor.

Its subcellular location is the cytoplasm. The enzyme catalyses 2 D-alanine + ATP = D-alanyl-D-alanine + ADP + phosphate + H(+). The protein operates within cell wall biogenesis; peptidoglycan biosynthesis. In terms of biological role, cell wall formation. This is D-alanine--D-alanine ligase from Staphylococcus epidermidis (strain ATCC 35984 / DSM 28319 / BCRC 17069 / CCUG 31568 / BM 3577 / RP62A).